The primary structure comprises 138 residues: Protein FAM136A (138 aa).

The residue at position 2 (alanine 2) is an N-acetylalanine. A phosphothreonine mark is found at threonine 124 and threonine 126.

It belongs to the FAM136 family.

In Homo sapiens (Human), this protein is Protein FAM136A (FAM136A).